An 853-amino-acid chain; its full sequence is Leucine--tRNA ligase (853 aa).

The short motif at 40–50 (PYPSGKMHMGH) is the 'HIGH' region element. Residues 609–613 (KMSKS) carry the 'KMSKS' region motif. Lys-612 is an ATP binding site.

It belongs to the class-I aminoacyl-tRNA synthetase family.

Its subcellular location is the cytoplasm. The catalysed reaction is tRNA(Leu) + L-leucine + ATP = L-leucyl-tRNA(Leu) + AMP + diphosphate. In Brachyspira hyodysenteriae (strain ATCC 49526 / WA1), this protein is Leucine--tRNA ligase.